Here is a 456-residue protein sequence, read N- to C-terminus: MDSIKGTDEKYLTVSELNWYVKQKFDRDPYLRQIFLQGELSNFRFRRGGHQYFSLKDDKSKINVVMFRGDFDKVKFEPEEGMKVYVTGRLSTYEAQGSYQFYAKSMEPAGLGALYERFRQLQEKLAKEGLFAQEHKRPLPLFPDKIAVVTSASGAVIHDIMVTANRRFSHAEIDLFPAQVQGESAAGSLVSAMQQIQARADEYDVLIIGRGGGSLEDLWPFNEEEVVRQVYAMKMPVISSVGHETDTTLCDLAADCRAATPTAAAEMATPALPLVLAEIGQLQTRLLTDIRAVIQVRAQALAQLENSFIMKEPQRLYEQKMQQVDQLSQQLSRMMEVIVKDQGQKLSLLTQRLQHQAPDRRIKQLKQENSYLAKSLEMGIKRILEQKQAACRQAVQQLDDYSPLKTLARGYSYTTDASGNVVKSVQQLVPGDQVRLHLKDGQAIGRIEEIKEEKND.

The protein belongs to the XseA family. As to quaternary structure, heterooligomer composed of large and small subunits.

It is found in the cytoplasm. It catalyses the reaction Exonucleolytic cleavage in either 5'- to 3'- or 3'- to 5'-direction to yield nucleoside 5'-phosphates.. Its function is as follows. Bidirectionally degrades single-stranded DNA into large acid-insoluble oligonucleotides, which are then degraded further into small acid-soluble oligonucleotides. In Lactobacillus delbrueckii subsp. bulgaricus (strain ATCC 11842 / DSM 20081 / BCRC 10696 / JCM 1002 / NBRC 13953 / NCIMB 11778 / NCTC 12712 / WDCM 00102 / Lb 14), this protein is Exodeoxyribonuclease 7 large subunit.